Reading from the N-terminus, the 830-residue chain is ATP-dependent DNA helicase chl-1 (830 aa).

The Helicase ATP-binding domain maps to 1–403; sequence MDEFSFPFQP…HNLLYMKQLE (403 aa). ATP is bound at residue 35–42; it reads SPTGTGKS. Composition is skewed to basic and acidic residues over residues 124–140 and 157–168; these read GMVE…RDTD and NDEKSEKQRDSD. Positions 124-173 are disordered; sequence GMVEVSRKRKAPARDTDQFLEPQDEAAPSEEYNNDEKSEKQRDSDFFDDV. Cys222, Cys240, Cys272, and Cys308 together coordinate [4Fe-4S] cluster. A DEAH box motif is present at residues 351–354; sequence DEAH.

This sequence belongs to the DEAD box helicase family. DEAH subfamily. DDX11/CHL1 sub-subfamily. It depends on [4Fe-4S] cluster as a cofactor.

Its subcellular location is the nucleus. It catalyses the reaction Couples ATP hydrolysis with the unwinding of duplex DNA at the replication fork by translocating in the 5'-3' direction. This creates two antiparallel DNA single strands (ssDNA). The leading ssDNA polymer is the template for DNA polymerase III holoenzyme which synthesizes a continuous strand.. The enzyme catalyses ATP + H2O = ADP + phosphate + H(+). Required for normal cell proliferation and chromosome stability. Plays a role in DNA repair during replication. This is ATP-dependent DNA helicase chl-1 from Caenorhabditis elegans.